Reading from the N-terminus, the 254-residue chain is Switch-activating protein 1 (254 aa).

A compositionally biased stretch (basic and acidic residues) spans 1 to 10 (MEAPKMELKS). The disordered stretch occupies residues 1 to 30 (MEAPKMELKSYKRKNASLSPSSSPAKAQRT). Positions 16-25 (ASLSPSSSPA) are enriched in low complexity. A phosphoserine mark is found at Ser-17 and Ser-19. A run of 4 repeats spans residues 221–224 (GVNM), 225–228 (GTNM), 229–232 (GANM), and 233–236 (GANM). Residues 221 to 236 (GVNMGTNMGANMGANM) form a 4 X 4 AA tandem repeats of G-[ATV]-N-M region.

In terms of assembly, homodimer.

The protein localises to the nucleus. Binds to sequences required for mating-type switching. Makes a simultaneous contact with both the alpha and beta domains of the switch-activating site SAS1. Also binds to replication fork barrier 1 (RFB1) located within a 78 base pair sequence near the 3' end of the rRNA coding region. This leads to replication fork blockage. It binds the consensus sequence 5'-TA[AG]GCAGNTN[CT]AACG[AC]G-3'. In terms of biological role, has a role in chromosome organization and integrity where it is involved in chromosome segregation. Has a role in sister chromatid cohesion and condensation. The sequence is that of Switch-activating protein 1 (sap1) from Schizosaccharomyces pombe (strain 972 / ATCC 24843) (Fission yeast).